Consider the following 498-residue polypeptide: ATP synthase subunit beta, chloroplastic (498 aa).

ATP is bound at residue 172–179 (GGAGVGKT).

This sequence belongs to the ATPase alpha/beta chains family. F-type ATPases have 2 components, CF(1) - the catalytic core - and CF(0) - the membrane proton channel. CF(1) has five subunits: alpha(3), beta(3), gamma(1), delta(1), epsilon(1). CF(0) has four main subunits: a(1), b(1), b'(1) and c(9-12).

The protein localises to the plastid. It is found in the chloroplast thylakoid membrane. It catalyses the reaction ATP + H2O + 4 H(+)(in) = ADP + phosphate + 5 H(+)(out). Functionally, produces ATP from ADP in the presence of a proton gradient across the membrane. The catalytic sites are hosted primarily by the beta subunits. The chain is ATP synthase subunit beta, chloroplastic from Idiospermum australiense (Ribbonwood tree).